The chain runs to 1008 residues: RNA cytidine acetyltransferase (1008 aa).

ATP contacts are provided by residues 282–291 (GRGKSAALGL) and Arg-443. Residues 531–713 (CLLGPVQRMD…VPVYLSQKSN (183 aa)) enclose the N-acetyltransferase domain. Residues 601–603 (VAT), 608–614 (QRMGYGK), and Asn-700 each bind acetyl-CoA. A Phosphoserine modification is found at Ser-907. The segment at 950–1008 (ALETNGTGGGSGLLSVKSGVKRLDGPIETREDGDLAAPLSKKKKKNNPKQRRSQGKSLI) is disordered. Over residues 970–982 (KRLDGPIETREDG) the composition is skewed to basic and acidic residues. Basic residues predominate over residues 989-1008 (SKKKKKNNPKQRRSQGKSLI).

It belongs to the RNA cytidine acetyltransferase family. NAT10 subfamily. As to quaternary structure, component of the PRC1 complex (PSC, PC, PH and dRING1) in 0-12 hours Drosophila embryos. This complex is distinct from the Esc/E(z) complex, which contains many other PcG proteins like Esc, E(z), Su(z)12, HDAC1/Rpd3, Caf1-55 and probably Pho. The two complexes however cooperate and interact together during the first 3 hours of development to establish PcG silencing. Part of the small subunit (SSU) processome, composed of more than 70 proteins and the RNA chaperone small nucleolar RNA (snoRNA) U3.

It is found in the nucleus. The protein resides in the nucleolus. The catalysed reaction is a cytidine in 18S rRNA + acetyl-CoA + ATP + H2O = an N(4)-acetylcytidine in 18S rRNA + ADP + phosphate + CoA + H(+). It carries out the reaction a cytidine in tRNA + acetyl-CoA + ATP + H2O = an N(4)-acetylcytidine in tRNA + ADP + phosphate + CoA + H(+). In terms of biological role, RNA cytidine acetyltransferase with specificity toward both 18S rRNA and tRNAs. Catalyzes the formation of N(4)-acetylcytidine (ac4C) in 18S rRNA. Required for early nucleolar cleavages of precursor rRNA at sites A0, A1 and A2 during 18S rRNA synthesis. Catalyzes the formation of ac4C in serine and leucine tRNAs. Requires a tRNA-binding adapter protein for full tRNA acetyltransferase activity but not for 18S rRNA acetylation. Polycomb group (PcG) protein. PcG proteins act by forming multiprotein complexes, which are required to maintain the transcriptionally repressive state of homeotic genes throughout development. PcG proteins are not required to initiate repression, but to maintain it during later stages of development. They probably act via the methylation of histones, rendering chromatin heritably changed in its expressibility. Part of the small subunit (SSU) processome, first precursor of the small eukaryotic ribosomal subunit. During the assembly of the SSU processome in the nucleolus, many ribosome biogenesis factors, an RNA chaperone and ribosomal proteins associate with the nascent pre-rRNA and work in concert to generate RNA folding, modifications, rearrangements and cleavage as well as targeted degradation of pre-ribosomal RNA by the RNA exosome. The sequence is that of RNA cytidine acetyltransferase (l(1)G0020) from Drosophila melanogaster (Fruit fly).